The chain runs to 456 residues: MLNNAMSVVILAAGKGTRMYSDLPKVLHTLAGKTMVQHVIDAANELGAAHVHLVYGHGGDLLKQALKNDNLNWVLQAEQLGTGHAMQQAAPFFADDEDILMLYGDVPLISVETLQRLRDAKPQGGIGLLTVKLDDPTGYGRITRENGKVTGIVEHKDATDEQRQIQEINTGILIANGADMKRWLAKLTNNNAQGEYYITDIIALAYQEGREIVAVHPQRLSEVEGVNNRLQLSRLERVYQSEQAEKLLLAGVMLRDPARFDLRGTLTHGRDVEIDTNVIIEGNVTLGHRVKIGAGCVIKNSVIGDDCEISPYTVVEDANLAAACTIGPFARLRPGAELLEGAHVGNFVEMKKARLGKGSKAGHLTYLGDAEIGDNVNIGAGTITCNYDGANKFKTIIGDDVFVGSDTQLVAPVTVGKGATIAAGTTVTRNIGENALAISRVPQAQKEGWRRPVKKK.

The pyrophosphorylase stretch occupies residues 1–229 (MLNNAMSVVI…LSEVEGVNNR (229 aa)). Residues 11–14 (LAAG), K25, Q76, 81–82 (GT), 103–105 (YGD), G140, E154, N169, and N227 contribute to the UDP-N-acetyl-alpha-D-glucosamine site. D105 is a binding site for Mg(2+). N227 is a Mg(2+) binding site. A linker region spans residues 230–250 (LQLSRLERVYQSEQAEKLLLA). The tract at residues 251–456 (GVMLRDPARF…EGWRRPVKKK (206 aa)) is N-acetyltransferase. UDP-N-acetyl-alpha-D-glucosamine contacts are provided by R333 and K351. The Proton acceptor role is filled by H363. UDP-N-acetyl-alpha-D-glucosamine contacts are provided by Y366 and N377. Residues A380, 386–387 (NY), S405, A423, and R440 each bind acetyl-CoA.

In the N-terminal section; belongs to the N-acetylglucosamine-1-phosphate uridyltransferase family. It in the C-terminal section; belongs to the transferase hexapeptide repeat family. As to quaternary structure, homotrimer. Mg(2+) serves as cofactor.

The protein resides in the cytoplasm. It carries out the reaction alpha-D-glucosamine 1-phosphate + acetyl-CoA = N-acetyl-alpha-D-glucosamine 1-phosphate + CoA + H(+). It catalyses the reaction N-acetyl-alpha-D-glucosamine 1-phosphate + UTP + H(+) = UDP-N-acetyl-alpha-D-glucosamine + diphosphate. The protein operates within nucleotide-sugar biosynthesis; UDP-N-acetyl-alpha-D-glucosamine biosynthesis; N-acetyl-alpha-D-glucosamine 1-phosphate from alpha-D-glucosamine 6-phosphate (route II): step 2/2. Its pathway is nucleotide-sugar biosynthesis; UDP-N-acetyl-alpha-D-glucosamine biosynthesis; UDP-N-acetyl-alpha-D-glucosamine from N-acetyl-alpha-D-glucosamine 1-phosphate: step 1/1. It functions in the pathway bacterial outer membrane biogenesis; LPS lipid A biosynthesis. Catalyzes the last two sequential reactions in the de novo biosynthetic pathway for UDP-N-acetylglucosamine (UDP-GlcNAc). The C-terminal domain catalyzes the transfer of acetyl group from acetyl coenzyme A to glucosamine-1-phosphate (GlcN-1-P) to produce N-acetylglucosamine-1-phosphate (GlcNAc-1-P), which is converted into UDP-GlcNAc by the transfer of uridine 5-monophosphate (from uridine 5-triphosphate), a reaction catalyzed by the N-terminal domain. The protein is Bifunctional protein GlmU of Escherichia coli O127:H6 (strain E2348/69 / EPEC).